The primary structure comprises 398 residues: Elongation factor Tu (398 aa).

The region spanning 10–207 (KPHVNIGTIG…TVDEYIPEPE (198 aa)) is the tr-type G domain. A G1 region spans residues 19-26 (GHVDHGKT). GTP is bound at residue 19–26 (GHVDHGKT). Residue Thr-26 participates in Mg(2+) binding. Residues 63-67 (GITIN) form a G2 region. Residues 84 to 87 (DAPG) are G3. GTP-binding positions include 84 to 88 (DAPGH) and 139 to 142 (NKVD). A G4 region spans residues 139–142 (NKVD). The G5 stretch occupies residues 177–179 (SAL).

This sequence belongs to the TRAFAC class translation factor GTPase superfamily. Classic translation factor GTPase family. EF-Tu/EF-1A subfamily. As to quaternary structure, monomer.

Its subcellular location is the cytoplasm. It catalyses the reaction GTP + H2O = GDP + phosphate + H(+). GTP hydrolase that promotes the GTP-dependent binding of aminoacyl-tRNA to the A-site of ribosomes during protein biosynthesis. The protein is Elongation factor Tu of Streptococcus agalactiae serotype V (strain ATCC BAA-611 / 2603 V/R).